We begin with the raw amino-acid sequence, 529 residues long: Glucose-6-phosphate isomerase (529 aa).

Residue Glu-322 is the Proton donor of the active site. Active-site residues include His-351 and Lys-455.

The protein belongs to the GPI family.

It is found in the cytoplasm. It catalyses the reaction alpha-D-glucose 6-phosphate = beta-D-fructose 6-phosphate. It participates in carbohydrate biosynthesis; gluconeogenesis. Its pathway is carbohydrate degradation; glycolysis; D-glyceraldehyde 3-phosphate and glycerone phosphate from D-glucose: step 2/4. In terms of biological role, catalyzes the reversible isomerization of glucose-6-phosphate to fructose-6-phosphate. The protein is Glucose-6-phosphate isomerase of Acaryochloris marina (strain MBIC 11017).